A 228-amino-acid chain; its full sequence is Cytochrome c oxidase subunit 2 (228 aa).

The Mitochondrial intermembrane segment spans residues 1–14 (MAYPLQLGFQDATS). A helical transmembrane segment spans residues 15 to 45 (PVMEELLHFHDHTLMIIFLISSLVLYIIMLM). Topologically, residues 46 to 59 (LTSKLVHTNMMNVQ) are mitochondrial matrix. A helical membrane pass occupies residues 60–87 (EMEMIWTILPAIILILIALPSLHTLYMM). Residues 88–228 (DEINNPLLTI…FENWSASLAQ (141 aa)) lie on the Mitochondrial intermembrane side of the membrane. Cu cation-binding residues include His-161, Cys-196, Glu-198, Cys-200, His-204, and Met-207. Glu-198 contacts Mg(2+). Position 218 is a phosphotyrosine (Tyr-218).

It belongs to the cytochrome c oxidase subunit 2 family. Component of the cytochrome c oxidase (complex IV, CIV), a multisubunit enzyme composed of 14 subunits. The complex is composed of a catalytic core of 3 subunits MT-CO1, MT-CO2 and MT-CO3, encoded in the mitochondrial DNA, and 11 supernumerary subunits COX4I, COX5A, COX5B, COX6A, COX6B, COX6C, COX7A, COX7B, COX7C, COX8 and NDUFA4, which are encoded in the nuclear genome. The complex exists as a monomer or a dimer and forms supercomplexes (SCs) in the inner mitochondrial membrane with NADH-ubiquinone oxidoreductase (complex I, CI) and ubiquinol-cytochrome c oxidoreductase (cytochrome b-c1 complex, complex III, CIII), resulting in different assemblies (supercomplex SCI(1)III(2)IV(1) and megacomplex MCI(2)III(2)IV(2)). Found in a complex with TMEM177, COA6, COX18, COX20, SCO1 and SCO2. Interacts with TMEM177 in a COX20-dependent manner. Interacts with COX20. Interacts with COX16. It depends on Cu cation as a cofactor.

Its subcellular location is the mitochondrion inner membrane. The catalysed reaction is 4 Fe(II)-[cytochrome c] + O2 + 8 H(+)(in) = 4 Fe(III)-[cytochrome c] + 2 H2O + 4 H(+)(out). Component of the cytochrome c oxidase, the last enzyme in the mitochondrial electron transport chain which drives oxidative phosphorylation. The respiratory chain contains 3 multisubunit complexes succinate dehydrogenase (complex II, CII), ubiquinol-cytochrome c oxidoreductase (cytochrome b-c1 complex, complex III, CIII) and cytochrome c oxidase (complex IV, CIV), that cooperate to transfer electrons derived from NADH and succinate to molecular oxygen, creating an electrochemical gradient over the inner membrane that drives transmembrane transport and the ATP synthase. Cytochrome c oxidase is the component of the respiratory chain that catalyzes the reduction of oxygen to water. Electrons originating from reduced cytochrome c in the intermembrane space (IMS) are transferred via the dinuclear copper A center (CU(A)) of subunit 2 and heme A of subunit 1 to the active site in subunit 1, a binuclear center (BNC) formed by heme A3 and copper B (CU(B)). The BNC reduces molecular oxygen to 2 water molecules using 4 electrons from cytochrome c in the IMS and 4 protons from the mitochondrial matrix. This Loxodonta africana (African elephant) protein is Cytochrome c oxidase subunit 2 (MT-CO2).